Reading from the N-terminus, the 243-residue chain is Probable transcriptional regulatory protein BG0025 (243 aa).

The protein belongs to the TACO1 family.

It localises to the cytoplasm. This chain is Probable transcriptional regulatory protein BG0025, found in Borrelia garinii subsp. bavariensis (strain ATCC BAA-2496 / DSM 23469 / PBi) (Borreliella bavariensis).